A 363-amino-acid chain; its full sequence is G-protein coupled receptor 6 (363 aa).

The Extracellular segment spans residues methionine 1–proline 75. Asparagine 2 and asparagine 9 each carry an N-linked (GlcNAc...) asparagine glycan. Residues alanine 28–proline 51 form a disordered region. N-linked (GlcNAc...) asparagine glycosylation occurs at asparagine 52. A helical transmembrane segment spans residues tryptophan 76–valine 95. Residues alanine 96–proline 107 lie on the Cytoplasmic side of the membrane. A helical membrane pass occupies residues methionine 108–valine 131. The Extracellular segment spans residues phenylalanine 132–leucine 143. Residues leucine 144–valine 165 form a helical membrane-spanning segment. The Cytoplasmic segment spans residues aspartate 166–valine 186. A helical membrane pass occupies residues histidine 187–leucine 206. Residues glycine 207–leucine 231 lie on the Extracellular side of the membrane. A helical membrane pass occupies residues serine 232–cysteine 250. Residues glutamine 251–glycine 278 are Cytoplasmic-facing. The chain crosses the membrane as a helical span at residues valine 279–glutamine 305. Residues glutamate 306–isoleucine 310 lie on the Extracellular side of the membrane. A helical membrane pass occupies residues tyrosine 311–phenylalanine 332. Over arginine 333–valine 363 the chain is Cytoplasmic. Residue cysteine 346 is the site of S-palmitoyl cysteine attachment. 3 positions are modified to phosphoserine: serine 357, serine 359, and serine 361.

It belongs to the G-protein coupled receptor 1 family. Expressed in the brain, with a prominent distribution in striatum.

The protein localises to the cell membrane. Orphan receptor with constitutive G(s) signaling activity that activate cyclic AMP. Promotes neurite outgrowth and blocks myelin inhibition in neurons. The protein is G-protein coupled receptor 6 (Gpr6) of Rattus norvegicus (Rat).